We begin with the raw amino-acid sequence, 105 residues long: Insulin-like peptide 7 (105 aa).

The first 18 residues, 1-18, serve as a signal peptide directing secretion; that stretch reads MPPIILVFFLVLIPASQQ. A propeptide spanning residues 19–57 is cleaved from the precursor; the sequence is YPFSLESLNDQIINEEVIEYMLENSIRSSRTRRVPDEKK. 4 disulfide bridges follow: C61/C90, C73/C103, C77/C104, and C89/C94.

This sequence belongs to the insulin family.

The protein resides in the secreted. Its function is as follows. Insulin-like peptide which plays a role in ageing as a consequence of daf-16 activity. This chain is Insulin-like peptide 7, found in Caenorhabditis elegans.